Reading from the N-terminus, the 581-residue chain is Myoneurin (581 aa).

The BTB domain maps to 24 to 89 (CDCTIVIGEF…IYTGTLNLDS (66 aa)). The tract at residues 167 to 193 (PKQGALAKKSSQTKKKKKAFNSQKTGQ) is disordered. 2 consecutive short sequence motifs (nuclear localization signal) follow at residues 174-190 (KKSSQTKKKKKAFNSQK) and 256-261 (KRKRGK). Ser288 is modified (phosphoserine). 7 C2H2-type zinc fingers span residues 301 to 323 (PMCNTCGKVFSEASSLRRHMRIH), 329 to 351 (YVCHLCGKAFTQCNQLKTHVRTH), 357 to 380 (YKCELCDKGFAQKCQLVFHSRMHH), 386 to 408 (YKCDVCNLQFATSSNLKIHARKH), 414 to 436 (YVCDRCGQRFAQASTLTYHVRRH), 442 to 464 (YVCDTCGKAFAVSSSLITHSRKH), and 470 to 493 (FICELCGNSYTDIKNLKKHKTKVH).

Belongs to the krueppel C2H2-type zinc-finger protein family.

The protein localises to the nucleus. This is Myoneurin (MYNN) from Bos taurus (Bovine).